Here is a 430-residue protein sequence, read N- to C-terminus: Enolase (430 aa).

(2R)-2-phosphoglycerate is bound at residue Gln167. The active-site Proton donor is the Glu209. Asp245, Glu286, and Asp313 together coordinate Mg(2+). 4 residues coordinate (2R)-2-phosphoglycerate: Lys338, Arg367, Ser368, and Lys389. The Proton acceptor role is filled by Lys338.

This sequence belongs to the enolase family. It depends on Mg(2+) as a cofactor.

It is found in the cytoplasm. Its subcellular location is the secreted. The protein localises to the cell surface. The catalysed reaction is (2R)-2-phosphoglycerate = phosphoenolpyruvate + H2O. Its pathway is carbohydrate degradation; glycolysis; pyruvate from D-glyceraldehyde 3-phosphate: step 4/5. Functionally, catalyzes the reversible conversion of 2-phosphoglycerate (2-PG) into phosphoenolpyruvate (PEP). It is essential for the degradation of carbohydrates via glycolysis. This is Enolase from Synechococcus sp. (strain CC9311).